Reading from the N-terminus, the 814-residue chain is MGLPALEFSDCCLDSPHFRETLKSHEAELDKTNKFIKELIKDGKSLISALKNLSSAKRKFADSLNEFKFQCIGDAETDDEMCIARSLQEFATVLRNLEDERIRMIENASEVLITPLEKFRKEQIGAAKEAKKKYDKETEKYCGILEKHLNLSSKKKESQLQEADSQVDLVRQHFYEVSLEYVFKVQEVQERKMFEFVEPLLAFLQGLFTFYHHGYELAKDFGDFKTQLTISIQNTRNRFEGTRSEVESLMKKMKENPLEHKTISPYTMEGYLYVQEKRHFGTSWVKHYCTYQRDSKQITMVPFDQKSGGKGGEDESVILKSCTRRKTDSIEKRFCFDVEAVDRPGVITMQALSEEDRRLWMEAMDGREPVYNSNKDSQSEGTAQLDSIGFSIIRKCIHAVETRGINEQGLYRIVGVNSRVQKLLSVLMDPKTASETETDICAEWEIKTITSALKTYLRMLPGPLMMYQFQRSFIKAAKLENQESRVSEIHSLVHRLPEKNRQMLQLLMNHLANVANNHKQNLMTVANLGVVFGPTLLRPQEETVAAIMDIKFQNIVIEILIENHEKIFNTVPDMPLTNAQLHLSRKKSSDSKPPSCSERPLTLFHTVQSTEKQEQRNSIINSSLESVSSNPNSILNSSSSLQPNMNSSDPDLAVVKPTRPNSLPPNPSPTSPLSPSWPMFSAPSSPMPTSSTSSDSSPVRSVAGFVWFSVAAVVLSLARSSLHAVFSLLVNFVPCHPNLHLLFDRPEEAVHEDSSTPFRKAKALYACKAEHDSELSFTAGTVFDNVHPSQEPGWLEGTLNGKTGLIPENYVEFL.

The BAR domain maps to 7 to 262 (EFSDCCLDSP…MKENPLEHKT (256 aa)). One can recognise a PH domain in the interval 265-369 (PYTMEGYLYV…WMEAMDGREP (105 aa)). The Rho-GAP domain maps to 383 to 568 (AQLDSIGFSI…ILIENHEKIF (186 aa)). Positions 624–648 (LESVSSNPNSILNSSSSLQPNMNSS) are enriched in low complexity. The disordered stretch occupies residues 624 to 696 (LESVSSNPNS…MPTSSTSSDS (73 aa)). Residues 662 to 672 (SLPPNPSPTSP) are compositionally biased toward pro residues. Phosphoserine is present on serine 668. Position 670 is a phosphothreonine (threonine 670). Serine 671 is modified (phosphoserine). The span at 673–696 (LSPSWPMFSAPSSPMPTSSTSSDS) shows a compositional bias: low complexity. The 59-residue stretch at 756–814 (TPFRKAKALYACKAEHDSELSFTAGTVFDNVHPSQEPGWLEGTLNGKTGLIPENYVEFL) folds into the SH3 domain.

In terms of assembly, interacts with NYAP1, NYAP2 and MYO16. Interacts with MICAL1 and WDR44. Binds to the C-terminus of PTK2/FAK1. As to quaternary structure, (Microbial infection) Interacts with human parainfluenza virus type 2 proteins P and V. Post-translationally, phosphorylated in a PINK1-dependent fashion promoting retrograde mitochondrial trafficking and clustering.

It localises to the endosome membrane. The protein localises to the cytoplasm. Its subcellular location is the cell junction. The protein resides in the focal adhesion. It is found in the cytoskeleton. Functionally, GTPase-activating protein for RHOA and CDC42. Facilitates mitochondrial quality control by promoting Parkin-mediated recruitment of autophagosomes to damaged mitochondria. Negatively regulates the growth of human parainfluenza virus type 2 by inhibiting hPIV-2-mediated RHOA activation via interaction with two of its viral proteins P and V. Its function is as follows. Associates with MICAL1 on the endosomal membrane to promote Rab8-Rab10-dependent tubule extension. After dissociation of MICAL1, recruits WDR44 which connects the endoplasmic reticulum (ER) with the endosomal tubule, thereby participating in the export of a subset of neosynthesized proteins. This is Rho GTPase-activating protein 26 (ARHGAP26) from Homo sapiens (Human).